The chain runs to 760 residues: Rho GTPase-activating protein 26 (760 aa).

The region spanning 7 to 262 (EFSECCLDSP…MKENPHEHKN (256 aa)) is the BAR domain. In terms of domain architecture, PH spans 265-369 (PYTMEGYLYV…WMEAMDGREP (105 aa)). A Rho-GAP domain is found at 383–568 (AQLDSIGFSI…ILIENHEKIF (186 aa)). Disordered regions lie at residues 571-617 (VPET…ESRN) and 658-701 (PNRP…SPIS). The segment covering 605–617 (HTAQPNEKQESRN) has biased composition (polar residues). The span at 674–701 (LSPSWPMFSAPSSPMPTSSTSSDSSPIS) shows a compositional bias: low complexity. Residues 702 to 760 (SPLRKARALYACKAEHDSELSFTAGTVFDNVHPSQEPGWLEGTLNGKTGLIPENYVEFL) form the SH3 domain.

As to quaternary structure, binds to the C-terminus of PTK2/FAK1. Detected in embryonic brain and liver, and at low levels in embryonic eye, heart, lung, intestine and skeletal muscle.

It is found in the cell junction. The protein localises to the focal adhesion. Its subcellular location is the cytoplasm. It localises to the cytoskeleton. The protein resides in the endosome membrane. In terms of biological role, GTPase-activating protein for RHOA and CDC42. May be involved in the regulation of neosynthesized protein export through a Rab-endososomal dependent export route. This chain is Rho GTPase-activating protein 26 (ARHGAP26), found in Gallus gallus (Chicken).